Reading from the N-terminus, the 153-residue chain is Riboflavin synthase (153 aa).

This sequence belongs to the DMRL synthase family. Homooligomer. The cofactor is Mg(2+).

It carries out the reaction 2 6,7-dimethyl-8-(1-D-ribityl)lumazine + H(+) = 5-amino-6-(D-ribitylamino)uracil + riboflavin. The protein operates within cofactor biosynthesis; riboflavin biosynthesis; riboflavin from 2-hydroxy-3-oxobutyl phosphate and 5-amino-6-(D-ribitylamino)uracil: step 2/2. Its activity is regulated as follows. Inhibited by EDTA. In Methanothermobacter thermautotrophicus (strain ATCC 29096 / DSM 1053 / JCM 10044 / NBRC 100330 / Delta H) (Methanobacterium thermoautotrophicum), this protein is Riboflavin synthase (ribC).